The chain runs to 322 residues: UV DNA damage endonuclease (322 aa).

Belongs to the uve1/UvsE family.

Component in a DNA repair pathway. Removal of UV LIGHT damaged nucleotides. Recognizes pyrimidine dimers and cleave a phosphodiester bond immediately 5' to the lesion. This Nostoc sp. (strain PCC 7120 / SAG 25.82 / UTEX 2576) protein is UV DNA damage endonuclease.